Reading from the N-terminus, the 92-residue chain is Probable Fe(2+)-trafficking protein (92 aa).

The protein belongs to the Fe(2+)-trafficking protein family.

Its function is as follows. Could be a mediator in iron transactions between iron acquisition and iron-requiring processes, such as synthesis and/or repair of Fe-S clusters in biosynthetic enzymes. This Shewanella halifaxensis (strain HAW-EB4) protein is Probable Fe(2+)-trafficking protein.